Reading from the N-terminus, the 665-residue chain is Transketolase 1 (665 aa).

Residue H26 coordinates substrate. Thiamine diphosphate contacts are provided by residues H66 and 114–116 (GPL). D155 serves as a coordination point for Mg(2+). Thiamine diphosphate-binding residues include G156 and N185. 2 residues coordinate Mg(2+): N185 and I187. H261, R358, and S385 together coordinate substrate. H261 lines the thiamine diphosphate pocket. Catalysis depends on E412, which acts as the Proton donor. Residue F438 coordinates thiamine diphosphate. H462, D470, and R521 together coordinate substrate.

Belongs to the transketolase family. As to quaternary structure, homodimer. Requires Mg(2+) as cofactor. Ca(2+) is required as a cofactor. Mn(2+) serves as cofactor. The cofactor is Co(2+). It depends on thiamine diphosphate as a cofactor.

The catalysed reaction is D-sedoheptulose 7-phosphate + D-glyceraldehyde 3-phosphate = aldehydo-D-ribose 5-phosphate + D-xylulose 5-phosphate. Functionally, catalyzes the transfer of a two-carbon ketol group from a ketose donor to an aldose acceptor, via a covalent intermediate with the cofactor thiamine pyrophosphate. The chain is Transketolase 1 (tkt1) from Vibrio cholerae serotype O1 (strain ATCC 39315 / El Tor Inaba N16961).